The following is a 76-amino-acid chain: Omega-scoloptoxin(13)-Ssm2b (76 aa).

A signal peptide spans 1 to 22 (MAYIYALIFAIVVCMNTDVIQA).

It belongs to the scoloptoxin-13 family. In terms of processing, contains 3 disulfide bonds. Expressed by the venom gland.

The protein resides in the secreted. In terms of biological role, inhibits voltage-gated calcium channel (Cav) currents. The chain is Omega-scoloptoxin(13)-Ssm2b from Scolopendra mutilans (Chinese red-headed centipede).